We begin with the raw amino-acid sequence, 353 residues long: Farnesyl pyrophosphate synthase (353 aa).

Lys57, Arg60, and Gln96 together coordinate isopentenyl diphosphate. Residue Lys57 is modified to N6-(2-hydroxyisobutyryl)lysine; alternate. Lys57 is subject to N6-acetyllysine; alternate. The Mg(2+) site is built by Asp103 and Asp107. Arg112 serves as a coordination point for dimethylallyl diphosphate. Position 113 (Arg113) interacts with isopentenyl diphosphate. Residues Lys200, Thr201, Gln240, Lys257, and Lys266 each coordinate dimethylallyl diphosphate.

It belongs to the FPP/GGPP synthase family. Homodimer. Interacts with RSAD2. Mg(2+) is required as a cofactor.

The protein localises to the cytoplasm. The catalysed reaction is isopentenyl diphosphate + dimethylallyl diphosphate = (2E)-geranyl diphosphate + diphosphate. It catalyses the reaction isopentenyl diphosphate + (2E)-geranyl diphosphate = (2E,6E)-farnesyl diphosphate + diphosphate. Its pathway is isoprenoid biosynthesis; farnesyl diphosphate biosynthesis; farnesyl diphosphate from geranyl diphosphate and isopentenyl diphosphate: step 1/1. It participates in isoprenoid biosynthesis; geranyl diphosphate biosynthesis; geranyl diphosphate from dimethylallyl diphosphate and isopentenyl diphosphate: step 1/1. Its activity is regulated as follows. Inactivated by interferon-induced RSAD2. This inactivation may result of disruption of lipid rafts at the plasma membrane, and thus have an antiviral effect since many enveloped viruses need lipid rafts to bud efficiently out of the cell. In terms of biological role, key enzyme in isoprenoid biosynthesis which catalyzes the formation of farnesyl diphosphate (FPP), a precursor for several classes of essential metabolites including sterols, dolichols, carotenoids, and ubiquinones. FPP also serves as substrate for protein farnesylation and geranylgeranylation. Catalyzes the sequential condensation of isopentenyl pyrophosphate with the allylic pyrophosphates, dimethylallyl pyrophosphate, and then with the resultant geranylpyrophosphate to the ultimate product farnesyl pyrophosphate. This is Farnesyl pyrophosphate synthase (Fdps) from Mus musculus (Mouse).